A 422-amino-acid polypeptide reads, in one-letter code: Acetyl-CoA acetyltransferase, mitochondrial (422 aa).

The N-terminal 28 residues, 1-28, are a transit peptide targeting the mitochondrion; sequence MPVLAALLRRGPLLQRRVQEIRYAERSY. K61 bears the N6-acetyllysine; alternate mark. K61 carries the post-translational modification N6-succinyllysine; alternate. K73 carries the N6-succinyllysine modification. C121 acts as the Acyl-thioester intermediate in catalysis. An N6-acetyllysine; alternate mark is found at K169, K176, K185, and K197. Residues K169, K176, K185, and K197 each carry the N6-succinyllysine; alternate modification. A CoA-binding site is contributed by Y214. Y214 provides a ligand contact to K(+). K218 is subject to N6-acetyllysine; alternate. Position 218 is an N6-succinyllysine; alternate (K218). An N6-succinyllysine modification is found at K238. K240 carries the N6-acetyllysine; alternate modification. K240 is modified (N6-succinyllysine; alternate). An N6-acetyllysine mark is found at K246 and K252. Residues 253–255 and K258 each bind CoA; that span reads RVD. Position 258 is an N6-acetyllysine; alternate (K258). N6-succinyllysine; alternate is present on K258. 2 positions are modified to N6-succinyllysine: K261 and K263. Residues A275, A276, and A278 each coordinate K(+). Residue S279 participates in CoA binding. K333 carries the N6-acetyllysine modification. K(+) is bound at residue V376. The active-site Proton donor/acceptor is C408.

Belongs to the thiolase-like superfamily. Thiolase family. In terms of assembly, homotetramer. In terms of processing, succinylation at Lys-263, adjacent to a coenzyme A binding site. Desuccinylated by SIRT5.

The protein resides in the mitochondrion. The enzyme catalyses 2 acetyl-CoA = acetoacetyl-CoA + CoA. It catalyses the reaction propanoyl-CoA + acetyl-CoA = 2-methyl-3-oxobutanoyl-CoA + CoA. The protein operates within lipid metabolism; fatty acid beta-oxidation. With respect to regulation, activated by potassium ions, but not sodium ions. This is one of the enzymes that catalyzes the last step of the mitochondrial beta-oxidation pathway, an aerobic process breaking down fatty acids into acetyl-CoA. Using free coenzyme A/CoA, catalyzes the thiolytic cleavage of medium- to long-chain 3-oxoacyl-CoAs into acetyl-CoA and a fatty acyl-CoA shortened by two carbon atoms. The activity of the enzyme is reversible and it can also catalyze the condensation of two acetyl-CoA molecules into acetoacetyl-CoA. Thereby, it plays a major role in ketone body metabolism. The protein is Acetyl-CoA acetyltransferase, mitochondrial (ACAT1) of Bos taurus (Bovine).